The chain runs to 771 residues: Semaphorin-3A (771 aa).

The N-terminal stretch at 1–20 is a signal peptide; the sequence is MGWLTRIVCLFWGVLLTARA. In terms of domain architecture, Sema spans 31-514; sequence RLKLSYKEML…STAGVAQLPL (484 aa). Residue asparagine 53 is glycosylated (N-linked (GlcNAc...) asparagine). An intrachain disulfide couples cysteine 103 to cysteine 114. Asparagine 125 carries an N-linked (GlcNAc...) asparagine glycan. Intrachain disulfides connect cysteine 132–cysteine 141, cysteine 269–cysteine 381, cysteine 293–cysteine 341, and cysteine 517–cysteine 535. Residues 580 to 664 enclose the Ig-like C2-type domain; the sequence is PEERIIYGVE…GFIQTLLKVT (85 aa). N-linked (GlcNAc...) asparagine glycosylation occurs at asparagine 590. A disulfide bond links cysteine 649 and cysteine 722. The span at 728–737 shows a compositional bias: basic residues; sequence RDRKQRRQRP. The tract at residues 728–771 is disordered; it reads RDRKQRRQRPGHTPGNSNKWKHLQENKKGRNRRTHEFERAPRSV. Basic and acidic residues predominate over residues 749-771; sequence HLQENKKGRNRRTHEFERAPRSV.

Belongs to the semaphorin family. As to quaternary structure, interacts with PLXND1. As to expression, expressed in the dorsal root ganglia.

It localises to the secreted. Its function is as follows. Involved in the development of the olfactory system and in neuronal control of puberty. Induces the collapse and paralysis of neuronal growth cones. Could serve as a ligand that guides specific growth cones by a motility-inhibiting mechanism. Binds to the complex neuropilin-1/plexin-1. The polypeptide is Semaphorin-3A (SEMA3A) (Homo sapiens (Human)).